A 561-amino-acid polypeptide reads, in one-letter code: Dihydroxy-acid dehydratase (561 aa).

D78 is a binding site for Mg(2+). Residue C119 participates in [2Fe-2S] cluster binding. Positions 120 and 121 each coordinate Mg(2+). Residue K121 is modified to N6-carboxylysine. A [2Fe-2S] cluster-binding site is contributed by C192. E448 contacts Mg(2+). Catalysis depends on S474, which acts as the Proton acceptor.

The protein belongs to the IlvD/Edd family. In terms of assembly, homodimer. [2Fe-2S] cluster serves as cofactor. Mg(2+) is required as a cofactor.

It carries out the reaction (2R)-2,3-dihydroxy-3-methylbutanoate = 3-methyl-2-oxobutanoate + H2O. The enzyme catalyses (2R,3R)-2,3-dihydroxy-3-methylpentanoate = (S)-3-methyl-2-oxopentanoate + H2O. The protein operates within amino-acid biosynthesis; L-isoleucine biosynthesis; L-isoleucine from 2-oxobutanoate: step 3/4. Its pathway is amino-acid biosynthesis; L-valine biosynthesis; L-valine from pyruvate: step 3/4. Its function is as follows. Functions in the biosynthesis of branched-chain amino acids. Catalyzes the dehydration of (2R,3R)-2,3-dihydroxy-3-methylpentanoate (2,3-dihydroxy-3-methylvalerate) into 2-oxo-3-methylpentanoate (2-oxo-3-methylvalerate) and of (2R)-2,3-dihydroxy-3-methylbutanoate (2,3-dihydroxyisovalerate) into 2-oxo-3-methylbutanoate (2-oxoisovalerate), the penultimate precursor to L-isoleucine and L-valine, respectively. This Sulfurimonas denitrificans (strain ATCC 33889 / DSM 1251) (Thiomicrospira denitrificans (strain ATCC 33889 / DSM 1251)) protein is Dihydroxy-acid dehydratase.